The chain runs to 249 residues: Protection of telomeres protein poz1 (249 aa).

As to quaternary structure, interacts with pot1, rap1 and tpz1.

The protein localises to the cytoplasm. It is found in the nucleus. It localises to the chromosome. Its subcellular location is the telomere. Functionally, telomeric DNA-binding protein that negatively regulates telomerase and telomere length. The sequence is that of Protection of telomeres protein poz1 (poz1) from Schizosaccharomyces pombe (strain 972 / ATCC 24843) (Fission yeast).